The sequence spans 668 residues: Transketolase 1 (668 aa).

Substrate is bound at residue His26. Thiamine diphosphate is bound by residues His66 and 114–116 (GPL). A Mg(2+)-binding site is contributed by Asp155. Gly156 and Asn185 together coordinate thiamine diphosphate. 2 residues coordinate Mg(2+): Asn185 and Ile187. 3 residues coordinate substrate: His261, Arg358, and Ser385. His261 is a thiamine diphosphate binding site. Glu413 functions as the Proton donor in the catalytic mechanism. Phe439 lines the thiamine diphosphate pocket. Substrate-binding residues include His463, Asp471, and Arg522.

The protein belongs to the transketolase family. As to quaternary structure, homodimer. Mg(2+) serves as cofactor. It depends on Ca(2+) as a cofactor. Requires Mn(2+) as cofactor. The cofactor is Co(2+). Thiamine diphosphate is required as a cofactor.

It carries out the reaction D-sedoheptulose 7-phosphate + D-glyceraldehyde 3-phosphate = aldehydo-D-ribose 5-phosphate + D-xylulose 5-phosphate. In terms of biological role, catalyzes the transfer of a two-carbon ketol group from a ketose donor to an aldose acceptor, via a covalent intermediate with the cofactor thiamine pyrophosphate. This chain is Transketolase 1 (tktA), found in Pasteurella multocida (strain Pm70).